Here is a 292-residue protein sequence, read N- to C-terminus: Histamine N-methyltransferase (292 aa).

E28 contacts substrate. Residues G60, E89, Q94, S120, and I142 each coordinate S-adenosyl-L-methionine. N283 contributes to the substrate binding site.

Belongs to the class I-like SAM-binding methyltransferase superfamily. HNMT family. In terms of assembly, monomer.

The protein localises to the cytoplasm. It carries out the reaction histamine + S-adenosyl-L-methionine = N(tau)-methylhistamine + S-adenosyl-L-homocysteine + H(+). Its function is as follows. Inactivates histamine by N-methylation. Plays an important role in degrading histamine and in regulating the airway response to histamine. The sequence is that of Histamine N-methyltransferase (HNMT) from Bos taurus (Bovine).